The primary structure comprises 854 residues: Aryl hydrocarbon receptor (854 aa).

A propeptide spanning residues Met1 to Tyr9 is cleaved from the precursor. Residues Met1–His38 are disordered. 2 short sequence motifs (nuclear localization signal) span residues Arg12–Arg15 and Lys36–Arg41. A bHLH domain is found at Pro26–Lys79. Residues Arg37 to Lys65 form a DNA-binding region. Required for maintaining the overall integrity of the AHR:ARNT heterodimer and its transcriptional activity stretches follow at residues Leu49–Phe81, Leu116–Val124, and Phe264–Ile266. Positions Leu63–Leu71 match the Nuclear export signal motif. Residues Gln111–Ala175 form the PAS 1 domain. The region spanning Leu270–Lys340 is the PAS 2 domain. The PAC domain maps to Met346 to Glu387. Positions Leu425–Ser452 are disordered. A compositionally biased stretch (polar residues) spans Pro440–Ser452.

Homodimer. Heterodimer; efficient DNA binding requires dimerization with another bHLH protein. Interacts with ARNT; the heterodimer ARNT:AHR binds to core DNA sequence 5'-TGCGTG-3' within the dioxin response element (DRE) of target gene promoters and activates their transcription. Binds MYBBP1A. Interacts with coactivators including SRC-1, RIP140 and NOCA7, and with the corepressor SMRT. Interacts with NEDD8 and IVNS1ABP. Interacts with BMAL1. Interacts with HSP90AB1. Interacts with TIPARP; leading to mono-ADP-ribosylation of AHR and subsequent inhibition of AHR. In terms of processing, mono-ADP-ribosylated, leading to inhibit transcription activator activity of AHR.

It is found in the cytoplasm. Its subcellular location is the nucleus. Its function is as follows. Ligand-activated transcription factor that enables cells to adapt to changing conditions by sensing compounds from the environment, diet, microbiome and cellular metabolism, and which plays important roles in development, immunity and cancer. Upon ligand binding, translocates into the nucleus, where it heterodimerizes with ARNT and induces transcription by binding to xenobiotic response elements (XRE). Regulates a variety of biological processes, including angiogenesis, hematopoiesis, drug and lipid metabolism, cell motility and immune modulation. Xenobiotics can act as ligands: upon xenobiotic-binding, activates the expression of multiple phase I and II xenobiotic chemical metabolizing enzyme genes (such as the CYP1A1 gene). Mediates biochemical and toxic effects of halogenated aromatic hydrocarbons. Next to xenobiotics, natural ligands derived from plants, microbiota, and endogenous metabolism are potent AHR agonists. Tryptophan (Trp) derivatives constitute an important class of endogenous AHR ligands. Acts as a negative regulator of anti-tumor immunity: indoles and kynurenic acid generated by Trp catabolism act as ligand and activate AHR, thereby promoting AHR-driven cancer cell motility and suppressing adaptive immunity. Regulates the circadian clock by inhibiting the basal and circadian expression of the core circadian component PER1. Inhibits PER1 by repressing the CLOCK-BMAL1 heterodimer mediated transcriptional activation of PER1. The heterodimer ARNT:AHR binds to core DNA sequence 5'-TGCGTG-3' within the dioxin response element (DRE) of target gene promoters and activates their transcription. This Mus spretus (Western Mediterranean mouse) protein is Aryl hydrocarbon receptor (Ahr).